A 168-amino-acid polypeptide reads, in one-letter code: Endoribonuclease YbeY (168 aa).

3 residues coordinate Zn(2+): His-125, His-129, and His-135.

It belongs to the endoribonuclease YbeY family. It depends on Zn(2+) as a cofactor.

The protein resides in the cytoplasm. Functionally, single strand-specific metallo-endoribonuclease involved in late-stage 70S ribosome quality control and in maturation of the 3' terminus of the 16S rRNA. This Rhodopseudomonas palustris (strain BisB18) protein is Endoribonuclease YbeY.